The primary structure comprises 535 residues: Light-independent protochlorophyllide reductase subunit B (535 aa).

Asp36 serves as a coordination point for [4Fe-4S] cluster. The Proton donor role is filled by Asp292. Position 428-429 (428-429 (GL)) interacts with substrate.

It belongs to the ChlB/BchB/BchZ family. Protochlorophyllide reductase is composed of three subunits; BchL, BchN and BchB. Forms a heterotetramer of two BchB and two BchN subunits. Requires [4Fe-4S] cluster as cofactor.

It carries out the reaction chlorophyllide a + oxidized 2[4Fe-4S]-[ferredoxin] + 2 ADP + 2 phosphate = protochlorophyllide a + reduced 2[4Fe-4S]-[ferredoxin] + 2 ATP + 2 H2O. It functions in the pathway porphyrin-containing compound metabolism; bacteriochlorophyll biosynthesis (light-independent). Functionally, component of the dark-operative protochlorophyllide reductase (DPOR) that uses Mg-ATP and reduced ferredoxin to reduce ring D of protochlorophyllide (Pchlide) to form chlorophyllide a (Chlide). This reaction is light-independent. The NB-protein (BchN-BchB) is the catalytic component of the complex. The sequence is that of Light-independent protochlorophyllide reductase subunit B from Pelodictyon phaeoclathratiforme (strain DSM 5477 / BU-1).